The sequence spans 122 residues: Large ribosomal subunit protein uL18 (122 aa).

It belongs to the universal ribosomal protein uL18 family. As to quaternary structure, part of the 50S ribosomal subunit; part of the 5S rRNA/L5/L18/L25 subcomplex. Contacts the 5S and 23S rRNAs.

In terms of biological role, this is one of the proteins that bind and probably mediate the attachment of the 5S RNA into the large ribosomal subunit, where it forms part of the central protuberance. This chain is Large ribosomal subunit protein uL18, found in Leptospira borgpetersenii serovar Hardjo-bovis (strain JB197).